The primary structure comprises 218 residues: Outer-membrane lipoprotein LolB (218 aa).

A signal peptide spans 1–20 (MSQVIRTLALTGLALAGLSG). Residue Cys21 is the site of N-palmitoyl cysteine attachment. Cys21 is lipidated: S-diacylglycerol cysteine.

The protein belongs to the LolB family. In terms of assembly, monomer.

It localises to the cell outer membrane. Its function is as follows. Plays a critical role in the incorporation of lipoproteins in the outer membrane after they are released by the LolA protein. The polypeptide is Outer-membrane lipoprotein LolB (Xanthomonas campestris pv. campestris (strain B100)).